Reading from the N-terminus, the 749-residue chain is Protein kinase domain-containing protein ppk32 (749 aa).

The Protein kinase domain occupies 21-317; sequence IQKENSVQVG…MFELERSPYF (297 aa). Disordered stretches follow at residues 598–677 and 706–749; these read KKLQ…VTAK and PLIP…KSLL. Residues 602–651 are compositionally biased toward polar residues; that stretch reads SKPSSVVPNRITTDPFSSQTKEATSKPSSISPNKATTNIFTSQASLSSQG. Ser632 carries the phosphoserine modification. Low complexity-rich tracts occupy residues 657 to 670 and 721 to 735; these read SSASSYRSYSQRAS and NRRVTTPVVNQNTVT.

The protein localises to the cytoplasm. In Schizosaccharomyces pombe (strain 972 / ATCC 24843) (Fission yeast), this protein is Protein kinase domain-containing protein ppk32 (ppk32).